Here is a 306-residue protein sequence, read N- to C-terminus: Ribosomal protein L11 methyltransferase (306 aa).

S-adenosyl-L-methionine contacts are provided by threonine 154, glycine 179, aspartate 201, and asparagine 242.

It belongs to the methyltransferase superfamily. PrmA family.

The protein localises to the cytoplasm. It carries out the reaction L-lysyl-[protein] + 3 S-adenosyl-L-methionine = N(6),N(6),N(6)-trimethyl-L-lysyl-[protein] + 3 S-adenosyl-L-homocysteine + 3 H(+). Methylates ribosomal protein L11. The sequence is that of Ribosomal protein L11 methyltransferase from Xanthomonas campestris pv. campestris (strain 8004).